A 241-amino-acid polypeptide reads, in one-letter code: Aspartate/glutamate leucyltransferase (241 aa).

The protein belongs to the R-transferase family. Bpt subfamily.

It is found in the cytoplasm. The enzyme catalyses N-terminal L-glutamyl-[protein] + L-leucyl-tRNA(Leu) = N-terminal L-leucyl-L-glutamyl-[protein] + tRNA(Leu) + H(+). The catalysed reaction is N-terminal L-aspartyl-[protein] + L-leucyl-tRNA(Leu) = N-terminal L-leucyl-L-aspartyl-[protein] + tRNA(Leu) + H(+). In terms of biological role, functions in the N-end rule pathway of protein degradation where it conjugates Leu from its aminoacyl-tRNA to the N-termini of proteins containing an N-terminal aspartate or glutamate. The sequence is that of Aspartate/glutamate leucyltransferase from Helicobacter hepaticus (strain ATCC 51449 / 3B1).